Reading from the N-terminus, the 34-residue chain is Delta-theraphotoxin-Hm1b (34 aa).

3 cysteine pairs are disulfide-bonded: C2-C16, C9-C21, and C15-C28. The residue at position 34 (F34) is a Phenylalanine amide.

Belongs to the neurotoxin 10 (Hwtx-1) family. 09 (HaTx) subfamily. Expressed by the venom gland.

It localises to the secreted. Functionally, gating-modifier toxin that potently and selectively acts on Nav1.1/SCN1A and Nav1.3/SCN3A. It enhances hNav1.1/SCN1A currents and delays fast inactivation of the channel (EC(50)=11.6 nM), leading to a sustained current. Similar effects are observed at Nav1.3/SCN3A (EC(50)=11.8 nM), but with less sustained currents. When tested on Nav1.2/SCN2A, the native toxin decreases the peak current by 50% at saturating concentration, whereas the recombinant toxin only shows a weak decrease of peak current. The native toxin specifically activates the voltage-gated sodium channel Nav1.1/SCN1A in somatosensory neurons to elicit acute pain and mechanical allodynia. When tested on Nav1.1/SCN1A, the toxin induces a hyperpolarising shift of the voltage-dependence of steady-state activation, and induces a depolarizing shift in the voltage dependence of inactivation. In addition, it does not modify the recovery from fast inactivation in Nav1.1/SCN1A. The toxin hydrophobic face probably interacts with the domain IV voltage-sensor of Nav1.1/SCN1A and Nav1.3/SCN3A and may trap the voltage-sensing S4 helix in a partially activated state. In vivo, intracerebroventricular injection into mice elicits convulsions, spasms, tremors and rapid death. When injected into mouse hindpaw, the toxin elicits an immediate and robust response to pain. However, intraplantar injection of toxin does not cause neurogenic inflammation or alter sensitivity to heat, indicative of a modality-specific effect on mechanosensitive neurons. The sequence is that of Delta-theraphotoxin-Hm1b from Heteroscodra maculata (Togo starburst tarantula).